Here is a 786-residue protein sequence, read N- to C-terminus: Protein SEY1 (786 aa).

Residues 1 to 684 lie on the Cytoplasmic side of the membrane; that stretch reads MSDLKEAIQL…KRSIVNTTER (684 aa). Residues 35 to 262 form the GB1/RHD3-type G domain; it reads GVKYHVISVF…QDASFFKDEY (228 aa). 45 to 52 lines the GTP pocket; sequence GSQSSGKS. Positions 355-375 form a coiled coil; sequence KKVYEERRDDLIKQLNTIIDE. A helical membrane pass occupies residues 685–705; it reads IPLYMYALVVALGWGRIITIL. Topologically, residues 706-708 are lumenal; the sequence is RNP. Residues 709–729 traverse the membrane as a helical segment; it reads ATIILSIIVLAGAYFVHKLNL. Residues 730–786 are Cytoplasmic-facing; the sequence is WGPLLQFANQATGQATAVLKQTVRSLVVDEEPKRKILVEPHESEGVDKEPSKNDQHL. The interval 765 to 786 is disordered; sequence ILVEPHESEGVDKEPSKNDQHL.

It belongs to the TRAFAC class dynamin-like GTPase superfamily. GB1/RHD3 GTPase family. RHD3 subfamily.

Its subcellular location is the endoplasmic reticulum membrane. In terms of biological role, cooperates with the reticulon proteins and tubule-shaping DP1 family proteins to generate and maintain the structure of the tubular endoplasmic reticulum network. Has GTPase activity, which is required for its function in ER organization. In Kluyveromyces lactis (strain ATCC 8585 / CBS 2359 / DSM 70799 / NBRC 1267 / NRRL Y-1140 / WM37) (Yeast), this protein is Protein SEY1.